The primary structure comprises 440 residues: Serine hydroxymethyltransferase (440 aa).

(6S)-5,6,7,8-tetrahydrofolate is bound by residues L119 and 123–125 (GHL). K228 carries the N6-(pyridoxal phosphate)lysine modification. 370 to 372 (SPF) lines the (6S)-5,6,7,8-tetrahydrofolate pocket.

Belongs to the SHMT family. Homodimer. Pyridoxal 5'-phosphate is required as a cofactor.

The protein localises to the cytoplasm. The catalysed reaction is (6R)-5,10-methylene-5,6,7,8-tetrahydrofolate + glycine + H2O = (6S)-5,6,7,8-tetrahydrofolate + L-serine. It participates in one-carbon metabolism; tetrahydrofolate interconversion. It functions in the pathway amino-acid biosynthesis; glycine biosynthesis; glycine from L-serine: step 1/1. In terms of biological role, catalyzes the reversible interconversion of serine and glycine with tetrahydrofolate (THF) serving as the one-carbon carrier. This reaction serves as the major source of one-carbon groups required for the biosynthesis of purines, thymidylate, methionine, and other important biomolecules. Also exhibits THF-independent aldolase activity toward beta-hydroxyamino acids, producing glycine and aldehydes, via a retro-aldol mechanism. This Chlorobaculum tepidum (strain ATCC 49652 / DSM 12025 / NBRC 103806 / TLS) (Chlorobium tepidum) protein is Serine hydroxymethyltransferase.